The primary structure comprises 223 residues: Ribose-5-phosphate isomerase A (223 aa).

Residues 32-35 (TGST), 85-88 (DGAD), and 98-101 (KGGG) contribute to the substrate site. Residue E107 is the Proton acceptor of the active site. Position 125 (K125) interacts with substrate.

The protein belongs to the ribose 5-phosphate isomerase family. As to quaternary structure, homodimer.

The catalysed reaction is aldehydo-D-ribose 5-phosphate = D-ribulose 5-phosphate. The protein operates within carbohydrate degradation; pentose phosphate pathway; D-ribose 5-phosphate from D-ribulose 5-phosphate (non-oxidative stage): step 1/1. Functionally, catalyzes the reversible conversion of ribose-5-phosphate to ribulose 5-phosphate. The polypeptide is Ribose-5-phosphate isomerase A (Marinomonas sp. (strain MWYL1)).